The sequence spans 140 residues: Mitochondrial import receptor subunit TOM22 homolog (140 aa).

The span at 1 to 11 (MAAAAAGPGAP) shows a compositional bias: low complexity. The tract at residues 1 to 40 (MAAAAAGPGAPLSADELLPKGDAEKPEEELEEEDDEELDE) is disordered. Residues 1 to 81 (MAAAAAGPGA…AQKMYRFSRA (81 aa)) lie on the Cytoplasmic side of the membrane. Ser-13 is modified (phosphoserine). A compositionally biased stretch (acidic residues) spans 25–40 (KPEEELEEEDDEELDE). The import sequence; necessary for mitochondrion outer membrane localization and integration in the TOM complex stretch occupies residues 39–48 (DETLSERLWG). Thr-41 bears the Phosphothreonine mark. Position 43 is a phosphoserine (Ser-43). Residues 81–101 (AALWIGTTSFMILVLPVVFET) form a TMD; necessary for mitochondrion outer membrane localization and integration in the TOM complex region. The helical transmembrane segment at 82 to 101 (ALWIGTTSFMILVLPVVFET) threads the bilayer. Topologically, residues 102-140 (EKLQMEQQQQLQQRQILLGPNTGLSGGMPGALPSLPGKI) are mitochondrial intermembrane. A C-tail signal; necessary for mitochondrion outer membrane localization and integration in the TOM complex region spans residues 121–140 (PNTGLSGGMPGALPSLPGKI).

It belongs to the Tom22 family. In terms of assembly, forms part of the preprotein translocase complex of the outer mitochondrial membrane (TOM complex) which consists of at least 7 different proteins (TOMM5, TOMM6, TOMM7, TOMM20, TOMM22, TOMM40 and TOMM70). Interacts with PPP2R2B and TOMM40.

The protein localises to the mitochondrion outer membrane. Central receptor component of the translocase of the outer membrane of mitochondria (TOM complex) responsible for the recognition and translocation of cytosolically synthesized mitochondrial preproteins. Together with the peripheral receptor TOM20 functions as the transit peptide receptor and facilitates the movement of preproteins into the translocation pore. Required for the translocation across the mitochondrial outer membrane of cytochrome P450 monooxygenases. The sequence is that of Mitochondrial import receptor subunit TOM22 homolog (TOMM22) from Bos taurus (Bovine).